Consider the following 267-residue polypeptide: Ribosomal RNA small subunit methyltransferase A (267 aa).

H13, L15, G40, E61, D85, and N105 together coordinate S-adenosyl-L-methionine.

The protein belongs to the class I-like SAM-binding methyltransferase superfamily. rRNA adenine N(6)-methyltransferase family. RsmA subfamily.

The protein localises to the cytoplasm. It catalyses the reaction adenosine(1518)/adenosine(1519) in 16S rRNA + 4 S-adenosyl-L-methionine = N(6)-dimethyladenosine(1518)/N(6)-dimethyladenosine(1519) in 16S rRNA + 4 S-adenosyl-L-homocysteine + 4 H(+). In terms of biological role, specifically dimethylates two adjacent adenosines (A1518 and A1519) in the loop of a conserved hairpin near the 3'-end of 16S rRNA in the 30S particle. May play a critical role in biogenesis of 30S subunits. The protein is Ribosomal RNA small subunit methyltransferase A of Bacteroides thetaiotaomicron (strain ATCC 29148 / DSM 2079 / JCM 5827 / CCUG 10774 / NCTC 10582 / VPI-5482 / E50).